A 246-amino-acid chain; its full sequence is Proteasome subunit alpha (246 aa).

It belongs to the peptidase T1A family. The 20S proteasome core is composed of 14 alpha and 14 beta subunits that assemble into four stacked heptameric rings, resulting in a barrel-shaped structure. The two inner rings, each composed of seven catalytic beta subunits, are sandwiched by two outer rings, each composed of seven alpha subunits. The catalytic chamber with the active sites is on the inside of the barrel. Has a gated structure, the ends of the cylinder being occluded by the N-termini of the alpha-subunits. Is capped at one or both ends by the proteasome regulatory ATPase, PAN.

It is found in the cytoplasm. The formation of the proteasomal ATPase PAN-20S proteasome complex, via the docking of the C-termini of PAN into the intersubunit pockets in the alpha-rings, triggers opening of the gate for substrate entry. Interconversion between the open-gate and close-gate conformations leads to a dynamic regulation of the 20S proteasome proteolysis activity. In terms of biological role, component of the proteasome core, a large protease complex with broad specificity involved in protein degradation. The polypeptide is Proteasome subunit alpha (Methanopyrus kandleri (strain AV19 / DSM 6324 / JCM 9639 / NBRC 100938)).